We begin with the raw amino-acid sequence, 615 residues long: Angiotensin-converting enzyme (615 aa).

The first 17 residues, 1-17, serve as a signal peptide directing secretion; that stretch reads MRLFLLALLATLAVTQA. One can recognise a Peptidase M2 domain in the interval 19–607; that stretch reads VKEEIQAKEY…IKNNVHIGWT (589 aa). Residue Asn-53 is glycosylated (N-linked (GlcNAc...) asparagine). A disulfide bridge connects residues Cys-133 and Cys-141. Asn-196 and Asn-311 each carry an N-linked (GlcNAc...) asparagine glycan. Cys-336 and Cys-354 are joined by a disulfide. His-367 is a Zn(2+) binding site. The active-site Proton acceptor is the Glu-368. Residues His-371 and Glu-395 each contribute to the Zn(2+) site. Residue His-497 is the Proton donor of the active site. Cys-522 and Cys-540 form a disulfide bridge.

It belongs to the peptidase M2 family. The cofactor is Zn(2+). In terms of processing, glycosylated. As to expression, expressed in vesicular structures in spermatocytes and early spermatids (at protein level).

The protein localises to the secreted. Its subcellular location is the extracellular space. It carries out the reaction Release of a C-terminal dipeptide, oligopeptide-|-Xaa-Yaa, when Xaa is not Pro, and Yaa is neither Asp nor Glu. Thus, conversion of angiotensin I to angiotensin II, with increase in vasoconstrictor activity, but no action on angiotensin II.. Its activity is regulated as follows. Inhibited by captopril and, to a lesser extent, by lisinopril, trandolaprilat, fosinoprilat and enalaprilat. Its function is as follows. May be involved in the specific maturation or degradation of a number of bioactive peptides. May play a role in the contractions of the heart, gut and testes, and in spermatid differentiation. This Drosophila melanogaster (Fruit fly) protein is Angiotensin-converting enzyme (Ance).